The following is a 646-amino-acid chain: mRNA 3'-end-processing protein RNA14 (646 aa).

HAT repeat units follow at residues 46–78 (DDYD…SELQ), 80–114 (NEFD…YVRR), 128–160 (VVIK…FLHQ), 171–204 (QRLD…WEQE), 249–281 (ANKN…WEKE), and 290–322 (ALKD…YEFD). The tract at residues 571-599 (DGDPSGVDKSFKKRQIENDENLPDSKRQK) is disordered.

Its subcellular location is the nucleus. It is found in the cytoplasm. In terms of biological role, component of the cleavage factor IA (CFIA) complex, which is involved in the endonucleolytic cleavage during polyadenylation-dependent pre-mRNA 3'-end formation. The polypeptide is mRNA 3'-end-processing protein RNA14 (RNA14) (Candida glabrata (strain ATCC 2001 / BCRC 20586 / JCM 3761 / NBRC 0622 / NRRL Y-65 / CBS 138) (Yeast)).